The chain runs to 378 residues: Ribosomal RNA large subunit methyltransferase G (378 aa).

Belongs to the methyltransferase superfamily. RlmG family.

It is found in the cytoplasm. The catalysed reaction is guanosine(1835) in 23S rRNA + S-adenosyl-L-methionine = N(2)-methylguanosine(1835) in 23S rRNA + S-adenosyl-L-homocysteine + H(+). Specifically methylates the guanine in position 1835 (m2G1835) of 23S rRNA. The polypeptide is Ribosomal RNA large subunit methyltransferase G (Shigella boydii serotype 18 (strain CDC 3083-94 / BS512)).